A 2367-amino-acid polypeptide reads, in one-letter code: MGWTCPVQGCMYSRSTWSNRGLKEDGLSSTMRCPGAMCGAMLVRSEPVQAPKATVVPQTPVTAVRPKRTVVSATPLRKQDCVVVVEVGFPALLSLEYPALAGRARHTGEFDSALLARKPSNGGTARAPTGWFKPRVVRTQPAKKALPSWVSEARRLIKGALEGSNAFGPRYCREKFPKARLVWVLGMLSKSSPPSVAIGRQLKKSFLALQARIARALAKKQSARAARRQEACRKIRLALQQARGIAALERQQARQLSGAGLYSVRLCTKRALSPIVEVPKRHKKKAISLPSPVSVQEFPEGLVGPNFWETSGLLNCVASPQRREDLVFPVYGIDSCRTDPEYFVVGPKSPSKIMGDTKPRLPTCPAEALNLLWASNLFEDWELDIIGQMVSDGLLTSQAFLDGCTLVSYYGQEQMVDSFHCLLQDPVPAEVAEALAVDVQALDFDAVFGCGISDFLRGTRDAMKGWIMDPVIAKSTTWCNTIIDKVRALFDQYFAPFHKIIDGMSYVNSLWAKCKEWAQSVLKNGSQLFSVMWETHCVSFVIIITCACTLLVENVLKELRLISRVGTLTSCVISGALGILGCGYILAKCEDLAVVSASIRAFLGVLLCPPTMEAVDLNQSLIPEEIQATSWTGVDRVLGALNAVGSGLTGFNTDTIIYWGRFAQSFDGMRRGKDAVCALAACLFEKLGTVYNRVTGKEAAFFHELSSLVSIDVQGWLNSSRRVMAESIAFAKSDAVAFATVERLINDGETIQLTAASAPKSHSMQFGQILAERLRELRTLRNDMAHAGSFEGRRCVPFWLYIYGPPGVGKTTTMHEFSQALLTAFEFPSDSLTSKSATDKYWSLYRRQALVQIDDLGAISESGMEQEMMNIVSSATYNPTMAVANEKTTLFDSKFIVSTSNNYSAGTDAKIHDRKAFNRRRRVVIKTRGKAGVAFNPHDSTAAAEFCVVERDDRAETPIWVQSGEAPDDKELYWMDFRTTVAYVIEQARIHHNAEDIEQAQYSMKHSRTRQLYQVCENYIGEVKMSVANFVPGDMLGAWNLEPKGRFFYSCVDGRVYSYDPEQKAHDEGPVDKALDFEQICLEKLSYTLQADIQGGPKSATAGIFLRSMVSGECAVESVDKLNRSASREHLIFFKNLSLADRVYLRLVQKRILQLAMVGDPLGLRSYTVMMEGFQNSYNYVKENGGRLLLILCSCMLLGIACYTFFNALAILIGGTSVAAGAAAMVDIGACGSTSTYASEYGAKMGRRNMPHRSREIPAVWSEETGHDEKWQLCGLLETCRSDMPAVHVNLVPGNKFAITKHQAQAIPDGSSVGLSVAGRSFRTFQWRASALTEYAESEICTYFDSRIPSLGKQAMKMYSDSDLDALNVKYFSTRTLHFRLVDDQVEKRHWDADACVISTPKTIVSTINGVIYRQEIPTAITYRRESVKHDCGALVFTEVRGKPKAVGMLVGTLGGTTYVCKFPHIEVDAFACVPDIRGFNLEAGVSTLGYSKLGWLDRRHQPHNSEKTEFVPIPEKYHMDDVPCKIPAVLSAKDPRLADIPQCMGYDPYKQGMEKFAHPMQEIDEQLLATVCDEIAQEFHDVGVRGRMVSMDEAINGHHKYEIPSFYVEGASTRELNELRTSCSAEVWCCDPRSDIEFEYPRIIPGPVESKWKCESTCCGCTFKSGGTEAIISFVKARSPCCEEIFFDGLDLTTSEGYPLFLDRPAGAKGKERFFEGSENQKFLIPDCPLDVQLKKGIEETHLGTPQLIIKESAKDELLKEGKVLPSEGMPGTRLFSICPAWYNIVVRQHFVYIAESVRKRRRTLSSQVGIVVGSREWDDLAARLRSKKNDKMYCCDYSKFDGLMTPQIVHAITNIYERMFSGNDGMSQFRQNLLMGICNRISICGSQVYRVEAGMPSGFALTVDFNSIFNEILVRCAYRSLVPEIERPFFSNNVVLIVYGDDNVLGIHPNIESAFNGNAIKAYMKEELGIKITDGADKLSPVICARPLEQCEFLKRTWRKDRQYGLYRAPLVETSIYSCLRYVRLQNYDWQAPLLQNVQGSLYEASLHGPDMHARIYKHFATHFPKWVEEHELYTYEQCRTRFIAAKNGDFNFHPASAQMGHVFSQQTEIQELSQSQNPKRCFQLHPKIHICGPGHNEQDCFYVDVRVKGKITKGKGFHHAPVFSAGSGQLGTVKWASSFRSSSACPMRDLAVDAFKRGECVYFRDNGELINAWLAAINFGMSINADGLDGLLQVYRNQGPTHLDDLSFYFEGGVVGVPAPAHLMVYGTDTSILNRLCPKTVLESAPPPGRSSNVSERSQVQTFLHMSPKPCFITLKGSGKVCHGLRCNNSCRGHISCTDVVRNSAANQRAAMLDVLRRGCYNIQ.

Residues 587–1194 lie on the Cytoplasmic side of the membrane; sequence AKCEDLAVVS…GGRLLLILCS (608 aa). Residues 776–940 form the SF3 helicase domain; it reads ELRTLRNDMA…AGVAFNPHDS (165 aa). ATP is bound at residue 804 to 811; sequence GPPGVGKT. A helical membrane pass occupies residues 1195 to 1215; the sequence is CMLLGIACYTFFNALAILIGG. Topologically, residues 1216 to 1235 are lumenal; the sequence is TSVAAGAAAMVDIGACGSTS. The Peptidase C3 domain occupies 1258-1468; it reads PAVWSEETGH…YVCKFPHIEV (211 aa). Active-site for picornain 3C-like protease activity residues include H1302, E1339, and C1432. One can recognise a RdRp catalytic domain in the interval 1832-1957; sequence DKMYCCDYSK…GIHPNIESAF (126 aa).

This sequence belongs to the nepoviruses RNA1 polyprotein family. Post-translationally, specific enzymatic cleavages by picornain 3C-like protease in vivo yield mature proteins. Picornain 3C-like protease is autocatalytically processed. VPg is uridylylated by the polymerase and is covalently linked to the 5'-end of genomic RNA. This uridylylated form acts as a nucleotide-peptide primer for the polymerase.

The protein resides in the host endoplasmic reticulum lumen. The protein localises to the host endoplasmic reticulum membrane. It carries out the reaction RNA(n) + a ribonucleoside 5'-triphosphate = RNA(n+1) + diphosphate. Functionally, picornain 3C-like protease is a thiol protease that cleaves the P1 and P2 polyproteins. The polypeptide is RNA1 polyprotein (Fragaria vesca (Woodland strawberry)).